The sequence spans 368 residues: tRNA 2-selenouridine synthase (368 aa).

The Rhodanese domain maps to 15-138 (FLNQHPIMDV…MRQYLIGVIE (124 aa)). The S-selanylcysteine intermediate role is filled by cysteine 98.

Belongs to the SelU family. In terms of assembly, monomer.

The catalysed reaction is 5-methylaminomethyl-2-thiouridine(34) in tRNA + selenophosphate + (2E)-geranyl diphosphate + H2O + H(+) = 5-methylaminomethyl-2-selenouridine(34) in tRNA + (2E)-thiogeraniol + phosphate + diphosphate. It carries out the reaction 5-methylaminomethyl-2-thiouridine(34) in tRNA + (2E)-geranyl diphosphate = 5-methylaminomethyl-S-(2E)-geranyl-thiouridine(34) in tRNA + diphosphate. The enzyme catalyses 5-methylaminomethyl-S-(2E)-geranyl-thiouridine(34) in tRNA + selenophosphate + H(+) = 5-methylaminomethyl-2-(Se-phospho)selenouridine(34) in tRNA + (2E)-thiogeraniol. It catalyses the reaction 5-methylaminomethyl-2-(Se-phospho)selenouridine(34) in tRNA + H2O = 5-methylaminomethyl-2-selenouridine(34) in tRNA + phosphate. Involved in the post-transcriptional modification of the uridine at the wobble position (U34) of tRNA(Lys), tRNA(Glu) and tRNA(Gln). Catalyzes the conversion of 2-thiouridine (S2U-RNA) to 2-selenouridine (Se2U-RNA). Acts in a two-step process involving geranylation of 2-thiouridine (S2U) to S-geranyl-2-thiouridine (geS2U) and subsequent selenation of the latter derivative to 2-selenouridine (Se2U) in the tRNA chain. This is tRNA 2-selenouridine synthase from Shewanella baltica (strain OS155 / ATCC BAA-1091).